The primary structure comprises 493 residues: Inosine-5'-monophosphate dehydrogenase (493 aa).

CBS domains are found at residues 97 to 155 (VIID…NAPI) and 159 to 219 (MTSE…AKDE). NAD(+) is bound by residues Asp-253 and 303-305 (GIG). Gly-305 and Gly-307 together coordinate K(+). Ser-308 lines the IMP pocket. Residue Cys-310 coordinates K(+). The Thioimidate intermediate role is filled by Cys-310. Residues 343 to 345 (DGG), 366 to 367 (GS), and 390 to 394 (YRGMG) each bind IMP. Arg-406 serves as the catalytic Proton acceptor. Glu-421 is an IMP binding site. K(+)-binding residues include Glu-475, Ser-476, and His-477.

It belongs to the IMPDH/GMPR family. As to quaternary structure, homotetramer. The cofactor is K(+).

It carries out the reaction IMP + NAD(+) + H2O = XMP + NADH + H(+). It participates in purine metabolism; XMP biosynthesis via de novo pathway; XMP from IMP: step 1/1. Its activity is regulated as follows. Mycophenolic acid (MPA) is a non-competitive inhibitor that prevents formation of the closed enzyme conformation by binding to the same site as the amobile flap. In contrast, mizoribine monophosphate (MZP) is a competitive inhibitor that induces the closed conformation. MPA is a potent inhibitor of mammalian IMPDHs but a poor inhibitor of the bacterial enzymes. MZP is a more potent inhibitor of bacterial IMPDH. In terms of biological role, catalyzes the conversion of inosine 5'-phosphate (IMP) to xanthosine 5'-phosphate (XMP), the first committed and rate-limiting step in the de novo synthesis of guanine nucleotides, and therefore plays an important role in the regulation of cell growth. In Streptococcus pyogenes serotype M3 (strain ATCC BAA-595 / MGAS315), this protein is Inosine-5'-monophosphate dehydrogenase.